A 177-amino-acid polypeptide reads, in one-letter code: Large ribosomal subunit protein uL6 (177 aa).

This sequence belongs to the universal ribosomal protein uL6 family. As to quaternary structure, part of the 50S ribosomal subunit.

In terms of biological role, this protein binds to the 23S rRNA, and is important in its secondary structure. It is located near the subunit interface in the base of the L7/L12 stalk, and near the tRNA binding site of the peptidyltransferase center. In Pseudomonas putida (strain W619), this protein is Large ribosomal subunit protein uL6.